We begin with the raw amino-acid sequence, 314 residues long: MSSRPVFLSAADVQDHLRSSSLLIAPLETALANFSSGPDGGVVQPVRTVVPVAKHRGFLGVMPAYSAAEDALTTKLVTFYEDHSATSTVPSHQATVLLFQPSNGSLLAVMDGNVITAKRTAAVSAIATKFLKPPNSEVLCILGAGVQAYSHYEVFTEQFFFKEVRIWNRTKENAEKFVNTVPGEVRICSSVQEAVTGADVIITVTMATEPILFGEWVKPGAHINAIGASRPDWRELDDELMKQAVLYVDSQEAALKESGDVLLSGAEIFAELGEVVKGVKPAHCEKTTVFKSLGMAVEDMVAAKLVYDSWSSGK.

Arg47 is a 3,3',5-triiodo-L-thyronine binding site. NADPH contacts are provided by Ser91, His92, Arg119, Ala144, Val146, Gln147, Asn168, Arg169, Thr170, Asn173, Thr205, and Met206. Glu257 lines the 3,3',5-triiodo-L-thyronine pocket. Residue Ser292 participates in NADPH binding.

Belongs to the ornithine cyclodeaminase/mu-crystallin family. Homodimer. Binds the thyroid hormone triiodothyronine (T3); T3 binding inhibits enzymatic activity.

It localises to the cytoplasm. The catalysed reaction is L-pipecolate + NAD(+) = Delta(1)-piperideine-2-carboxylate + NADH + H(+). The enzyme catalyses L-pipecolate + NADP(+) = Delta(1)-piperideine-2-carboxylate + NADPH + H(+). It catalyses the reaction L-proline + NADP(+) = 1-pyrroline-2-carboxylate + NADPH + H(+). It carries out the reaction L-proline + NAD(+) = 1-pyrroline-2-carboxylate + NADH + H(+). The catalysed reaction is (3R)-1,4-thiomorpholine-3-carboxylate + NAD(+) = 3,4-dehydrothiomorpholine-3-carboxylate + NADH + 2 H(+). The enzyme catalyses (3R)-1,4-thiomorpholine-3-carboxylate + NADP(+) = 3,4-dehydrothiomorpholine-3-carboxylate + NADPH + 2 H(+). It catalyses the reaction (S)-cystathionine ketimine + NADH + 2 H(+) = (3R,5S)-2,3,5,6,7-pentahydro-1,4-thiazepine-3,5-dicarboxylate + NAD(+). It carries out the reaction (S)-cystathionine ketimine + NADPH + 2 H(+) = (3R,5S)-2,3,5,6,7-pentahydro-1,4-thiazepine-3,5-dicarboxylate + NADP(+). The catalysed reaction is (R)-lanthionine ketimine + NADPH + 2 H(+) = (3R,5R)-1,4-thiomorpholine-3,5-dicarboxylate + NADP(+). The enzyme catalyses Delta(2)-thiazoline-2-carboxylate + NADPH + 2 H(+) = L-thiazolidine-2-carboxylate + NADP(+). Its function is as follows. Catalyzes the NAD(P)H-dependent reduction of imine double bonds of a number of cyclic ketimine substrates, including sulfur-containing cyclic ketimines. Under physiological conditions, it efficiently catalyzes delta(1)-piperideine-2-carboxylate (P2C) and delta(1)-pyrroline-2-carboxylate (Pyr2C) reduction, suggesting a central role in lysine and glutamate metabolism. Additional substrates are (S)-cystathionine ketimine (CysK), 3,4-dehydrothiomorpholine-3-carboxylate (AECK), and (R)-lanthionine ketimine (LK) that is reduced at very low rate compared to other substrates. Also catalyzes the NAD(P)H-dependent reduction of delta(2)-thiazoline-2-carboxylate (T2C). The chain is Ketimine reductase mu-crystallin (CRYM) from Bos taurus (Bovine).